The sequence spans 424 residues: CinA-like protein (424 aa).

This sequence belongs to the CinA family.

In Shewanella putrefaciens (strain CN-32 / ATCC BAA-453), this protein is CinA-like protein.